Reading from the N-terminus, the 99-residue chain is Large ribosomal subunit protein uL23 (99 aa).

Contacts protein L29, and trigger factor when it is bound to the ribosome. Part of the 50S ribosomal subunit.

One of the early assembly proteins it binds 23S rRNA. One of the proteins that surrounds the polypeptide exit tunnel on the outside of the ribosome. Forms the main docking site for trigger factor binding to the ribosome. This is Large ribosomal subunit protein uL23 from Rhodopseudomonas palustris (strain ATCC BAA-98 / CGA009).